Here is a 422-residue protein sequence, read N- to C-terminus: Glutamyl-tRNA reductase (422 aa).

Substrate is bound by residues 49-52, Ser110, 115-117, and Gln121; these read TCNR and EPQ. The Nucleophile role is filled by Cys50. 190–195 provides a ligand contact to NADP(+); the sequence is GAGETI.

Belongs to the glutamyl-tRNA reductase family. In terms of assembly, homodimer.

It catalyses the reaction (S)-4-amino-5-oxopentanoate + tRNA(Glu) + NADP(+) = L-glutamyl-tRNA(Glu) + NADPH + H(+). Its pathway is porphyrin-containing compound metabolism; protoporphyrin-IX biosynthesis; 5-aminolevulinate from L-glutamyl-tRNA(Glu): step 1/2. Catalyzes the NADPH-dependent reduction of glutamyl-tRNA(Glu) to glutamate 1-semialdehyde (GSA). The protein is Glutamyl-tRNA reductase of Colwellia psychrerythraea (strain 34H / ATCC BAA-681) (Vibrio psychroerythus).